The sequence spans 463 residues: Putative F-box protein At3g29830 (463 aa).

The F-box domain occupies 7 to 55; the sequence is RDRISSLPDVVLVMILSFLSFKDNVKTSILSKRWRNICYEAKNISFKES.

This is Putative F-box protein At3g29830 from Arabidopsis thaliana (Mouse-ear cress).